A 200-amino-acid chain; its full sequence is 7-methyl-GTP pyrophosphatase (200 aa).

The active-site Proton acceptor is Asp69.

The protein belongs to the Maf family. YceF subfamily. A divalent metal cation serves as cofactor.

It localises to the cytoplasm. It carries out the reaction N(7)-methyl-GTP + H2O = N(7)-methyl-GMP + diphosphate + H(+). Functionally, nucleoside triphosphate pyrophosphatase that hydrolyzes 7-methyl-GTP (m(7)GTP). May have a dual role in cell division arrest and in preventing the incorporation of modified nucleotides into cellular nucleic acids. This Colwellia psychrerythraea (strain 34H / ATCC BAA-681) (Vibrio psychroerythus) protein is 7-methyl-GTP pyrophosphatase.